The primary structure comprises 158 residues: NAD(P)H-quinone oxidoreductase subunit J, chloroplastic (158 aa).

The protein belongs to the complex I 30 kDa subunit family. NDH is composed of at least 16 different subunits, 5 of which are encoded in the nucleus.

It localises to the plastid. The protein localises to the chloroplast thylakoid membrane. It catalyses the reaction a plastoquinone + NADH + (n+1) H(+)(in) = a plastoquinol + NAD(+) + n H(+)(out). The enzyme catalyses a plastoquinone + NADPH + (n+1) H(+)(in) = a plastoquinol + NADP(+) + n H(+)(out). In terms of biological role, NDH shuttles electrons from NAD(P)H:plastoquinone, via FMN and iron-sulfur (Fe-S) centers, to quinones in the photosynthetic chain and possibly in a chloroplast respiratory chain. The immediate electron acceptor for the enzyme in this species is believed to be plastoquinone. Couples the redox reaction to proton translocation, and thus conserves the redox energy in a proton gradient. The protein is NAD(P)H-quinone oxidoreductase subunit J, chloroplastic of Coffea arabica (Arabian coffee).